Consider the following 329-residue polypeptide: Vomeronasal type-1 receptor 43 (329 aa).

The Extracellular segment spans residues 1–32 (MSKILFFSPCSLFSHTMNKNSRLHTNSNIGNT). The helical transmembrane segment at 33–53 (FFSEIGIGITGNSFLLLYHIL) threads the bilayer. The Cytoplasmic portion of the chain corresponds to 54-65 (KFIRGHRPRLTD). A helical transmembrane segment spans residues 66–86 (LPIGLLSLIHLLMLLVAAFIA). The Extracellular segment spans residues 87-109 (TDIFISRRGWDDIICKFLVYLYR). Cysteines 101 and 188 form a disulfide. Residues 110–130 (VLRGLSLCTTSMLSVLQAIIL) traverse the membrane as a helical segment. Residues 131–147 (SPRSSCLSKFKHISLHH) lie on the Cytoplasmic side of the membrane. The chain crosses the membrane as a helical span at residues 148–168 (ILCAILFLSVLYMLISSQLLV). The Extracellular portion of the chain corresponds to 169-209 (SIIATPNLTTNDLTYVTQSCSILPLSYLVESINSTLLAIRE). N-linked (GlcNAc...) asparagine glycans are attached at residues Asn175 and Asn201. The helical transmembrane segment at 210–230 (YFLISLMFLSTWYIVALLCMH) threads the bilayer. At 231–255 (RKQTQHLQETRLSLKKSPEQSATQT) the chain is on the cytoplasmic side. A helical transmembrane segment spans residues 256-276 (ILMLMTFFVLMTIYDNIVSCL). Topologically, residues 277–285 (RTMLLNDPT) are extracellular. Residues 286–306 (SYSIELFMIHIYATVSPFVFM) traverse the membrane as a helical segment. Topologically, residues 307–329 (SNEKHIVNFLRSMGKRMINLNLH) are cytoplasmic.

Belongs to the G-protein coupled receptor 1 family.

Its subcellular location is the cell membrane. Putative pheromone receptor implicated in the regulation of social and reproductive behavior. The sequence is that of Vomeronasal type-1 receptor 43 (Vmn1r43) from Mus musculus (Mouse).